We begin with the raw amino-acid sequence, 189 residues long: Segregation and condensation protein B (189 aa).

This sequence belongs to the ScpB family. Homodimer. Homodimerization may be required to stabilize the binding of ScpA to the Smc head domains. Component of a cohesin-like complex composed of ScpA, ScpB and the Smc homodimer, in which ScpA and ScpB bind to the head domain of Smc. The presence of the three proteins is required for the association of the complex with DNA.

The protein resides in the cytoplasm. In terms of biological role, participates in chromosomal partition during cell division. May act via the formation of a condensin-like complex containing Smc and ScpA that pull DNA away from mid-cell into both cell halves. In Streptococcus sanguinis (strain SK36), this protein is Segregation and condensation protein B.